The primary structure comprises 1111 residues: ATP-dependent DNA helicase mph1 (1111 aa).

Acidic residues-rich tracts occupy residues 1 to 18 (MSVS…EIDD) and 47 to 65 (VFDE…DEFQ). Disordered stretches follow at residues 1–81 (MSVS…EDVE), 101–144 (FVTQ…HQPD), 210–240 (AFDS…RTNR), and 259–280 (IPSQ…PTHH). 2 stretches are compositionally biased toward polar residues: residues 132–143 (PTTTTVDASHQP) and 215–238 (LSLS…QFRT). The 169-residue stretch at 306 to 474 (IAQRGLFHNL…AVIDGLGIAK (169 aa)) folds into the Helicase ATP-binding domain. 319–326 (LPTGLGKT) is a binding site for ATP. A DEAH box motif is present at residues 422-425 (DEAH). Positions 644–818 (YLKQVVLNHF…GTRFTFHDDT (175 aa)) constitute a Helicase C-terminal domain. Disordered regions lie at residues 836 to 898 (IDIP…RKPT), 998 to 1047 (SVLS…CTPE), and 1092 to 1111 (AERH…DTEE). Basic residues predominate over residues 852–864 (KRARPPKRPPKKF).

It belongs to the DEAD box helicase family. DEAH subfamily. FANCM sub-subfamily. As to quaternary structure, interacts with the MHF histone-fold complex to form the FANCM-MHF complex.

It is found in the nucleus. It carries out the reaction ATP + H2O = ADP + phosphate + H(+). In terms of biological role, ATP-dependent DNA helicase involved in DNA damage repair by homologous recombination and in genome maintenance. Capable of unwinding D-loops. Plays a role in limiting crossover recombinants during mitotic DNA double-strand break (DSB) repair. Component of a FANCM-MHF complex which promotes gene conversion at blocked replication forks, probably by reversal of the stalled fork. The protein is ATP-dependent DNA helicase mph1 of Neosartorya fischeri (strain ATCC 1020 / DSM 3700 / CBS 544.65 / FGSC A1164 / JCM 1740 / NRRL 181 / WB 181) (Aspergillus fischerianus).